Consider the following 276-residue polypeptide: Large ribosomal subunit protein uL2 (276 aa).

Residues 224 to 276 (VMNPVDHPHGGGEGKAPIGRKSPMTPWGKPTLGFKTRKKKNKSDKFIIRRRKK) are disordered. Residues 258–276 (KTRKKKNKSDKFIIRRRKK) are compositionally biased toward basic residues.

It belongs to the universal ribosomal protein uL2 family. As to quaternary structure, part of the 50S ribosomal subunit. Forms a bridge to the 30S subunit in the 70S ribosome.

Functionally, one of the primary rRNA binding proteins. Required for association of the 30S and 50S subunits to form the 70S ribosome, for tRNA binding and peptide bond formation. It has been suggested to have peptidyltransferase activity; this is somewhat controversial. Makes several contacts with the 16S rRNA in the 70S ribosome. The sequence is that of Large ribosomal subunit protein uL2 from Geobacillus sp. (strain WCH70).